A 343-amino-acid polypeptide reads, in one-letter code: MTERTLTLAFESSCDETSVAVIENGTKILSNIVATQIDSHQRFGGVVPEVASRHHIEQITKCTNEALEQADVDYNDLDAVAVTYGPGLVGSLLIGVTAAKAIAWAHNLPLVPVNHMAGHIYAARYVGEFQYPQMALLVSGGHTELVYMPSEHEYQIIGETRDDAAGEAYDKIGRVLGVNYPAGKTIDEWAAKGKDTFNFPRAMEKEDNYDFSFSGLKSAFINTVHNADQRGEKLDKYDLAASFQQSVIDVLAEKTMRALDDYPVKQLILAGGVAANHGLRARLDHDMKEFHPDVPMLQAPLKLCGDNAAMIGAAGYVNYKHGDRAGLDLNAVPGLMFDRIQSK.

Positions 115 and 119 each coordinate Fe cation. Substrate-binding positions include 137–141, aspartate 170, glycine 183, aspartate 187, and asparagine 276; that span reads LVSGG. Aspartate 306 lines the Fe cation pocket.

It belongs to the KAE1 / TsaD family. It depends on Fe(2+) as a cofactor.

It localises to the cytoplasm. It catalyses the reaction L-threonylcarbamoyladenylate + adenosine(37) in tRNA = N(6)-L-threonylcarbamoyladenosine(37) in tRNA + AMP + H(+). In terms of biological role, required for the formation of a threonylcarbamoyl group on adenosine at position 37 (t(6)A37) in tRNAs that read codons beginning with adenine. Is involved in the transfer of the threonylcarbamoyl moiety of threonylcarbamoyl-AMP (TC-AMP) to the N6 group of A37, together with TsaE and TsaB. TsaD likely plays a direct catalytic role in this reaction. This chain is tRNA N6-adenosine threonylcarbamoyltransferase, found in Limosilactobacillus reuteri (strain DSM 20016) (Lactobacillus reuteri).